We begin with the raw amino-acid sequence, 563 residues long: MRLEELKRLQNPLEQVNDGKYSFENHQLAMDAENNIEKYPLNLQPLESKVKIIQRAWREYLQRQEPLGKRSPSPPSVSSEKLSSSVSMNTFSDSSTPDYREDGMDLGSDAGSSSSSSRASSQSNSTKVTPCSECKSSSSPGGSLDLVSALEDYEEPFPVYQKKVIDEWAPEEDGEEEEEEDERDQRGYRDDRSPAREPGDVSARTRSGGGGGRSATTAMPPPVPNGNLHQHDPQDLRHNGNVVVAGRPSCSRGPRRAIQKPQPAGGRRSGRGPAAGGLCLQPPDGGTCVPEEPPVPPMDWEALEKHLAGLQFREQEVRNQGQARTNSTSAQKNERESIRQKLALGSFFDDGPGIYTSCSKSGKPSLSSRLQSGMNLQICFVNDSGSDKDSDADDSKTETSLDTPLSPMSKQSSSYSDRDTTEEESESLDDMDFLTRQKKLQAEAKMALAMAKPMAKMQVEVEKQNRKKSPVADLLPHMPHISECLMKRSLKPTDLRDMTIGQLQVIVNDLHSQIESLNEELVQLLLIRDELHTEQDAMLVDIEDLTRHAESQQKHMAEKMPAK.

The 21-residue stretch at 47-67 folds into the IQ domain; the sequence is ESKVKIIQRAWREYLQRQEPL. Disordered regions lie at residues 63-150, 164-295, 312-336, and 384-430; these read RQEP…VSAL, VIDE…EPPV, FREQEVRNQGQARTNSTSAQKNERE, and SGSD…SLDD. Residues 76–87 are compositionally biased toward low complexity; that stretch reads SVSSEKLSSSVS. The span at 88-97 shows a compositional bias: polar residues; that stretch reads MNTFSDSSTP. Positions 108-143 are enriched in low complexity; the sequence is SDAGSSSSSSRASSQSNSTKVTPCSECKSSSSPGGS. Over residues 168 to 182 the composition is skewed to acidic residues; it reads WAPEEDGEEEEEEDE. 2 stretches are compositionally biased toward basic and acidic residues: residues 183–199 and 229–238; these read RDQRGYRDDRSPAREPG and HQHDPQDLRH. Phosphoserine is present on S193. Polar residues predominate over residues 318–331; sequence RNQGQARTNSTSAQ. Over residues 385-399 the composition is skewed to basic and acidic residues; sequence GSDKDSDADDSKTET. Positions 400-411 are enriched in polar residues; the sequence is SLDTPLSPMSKQ. The required for interaction with ankyrins stretch occupies residues 419–563; it reads DTTEEESESL…KHMAEKMPAK (145 aa). A compositionally biased stretch (acidic residues) spans 420–430; it reads TTEEESESLDD. Positions 500 to 534 form a coiled coil; it reads IGQLQVIVNDLHSQIESLNEELVQLLLIRDELHTE.

In terms of assembly, homooligomer (via coiled coil domain). Interacts (via IQ domain) with calmodulin; the interaction is direct and lost in presence of calcium. Interacts with ANK3 (via ANK repeats); required for localization at axon initial segments (AIS) and nodes of Ranvier. Interacts with SPTBN4. Interacts with KCNQ2 and KCNQ3. In terms of tissue distribution, highly expressed in brain and to a lower extent in heart and kidney.

Its subcellular location is the cell projection. It is found in the axon. The protein localises to the cytoplasm. Its function is as follows. May play a role in action potential conduction in myelinated cells through the organization of molecular complexes at nodes of Ranvier and axon initial segments. May also play a role in axon outgrowth and guidance. The chain is IQCJ-SCHIP1 readthrough transcript protein from Homo sapiens (Human).